A 476-amino-acid chain; its full sequence is Cysteine--tRNA ligase (476 aa).

Cysteine 29 lines the Zn(2+) pocket. Residues 31–41 (PTVYDYPHLGH) carry the 'HIGH' region motif. Zn(2+) contacts are provided by cysteine 209, histidine 234, and glutamate 238. The short motif at 266–270 (KMSKS) is the 'KMSKS' region element. ATP is bound at residue lysine 269.

This sequence belongs to the class-I aminoacyl-tRNA synthetase family. The cofactor is Zn(2+).

The protein resides in the cytoplasm. It carries out the reaction tRNA(Cys) + L-cysteine + ATP = L-cysteinyl-tRNA(Cys) + AMP + diphosphate. This is Cysteine--tRNA ligase from Thermococcus gammatolerans (strain DSM 15229 / JCM 11827 / EJ3).